A 235-amino-acid polypeptide reads, in one-letter code: Probable transcriptional regulatory protein Cj1172c (235 aa).

This sequence belongs to the TACO1 family.

It localises to the cytoplasm. The sequence is that of Probable transcriptional regulatory protein Cj1172c from Campylobacter jejuni subsp. jejuni serotype O:2 (strain ATCC 700819 / NCTC 11168).